The following is a 232-amino-acid chain: Protein Mis18-alpha (232 aa).

3 positions are modified to phosphoserine: serine 36, serine 39, and serine 40. The Mis18 domain maps to 79–177 (PLVFLCSGCR…SVEAIESYIL (99 aa)). Positions 84, 87, 140, and 143 each coordinate Zn(2+). Residue lysine 161 forms a Glycyl lysine isopeptide (Lys-Gly) (interchain with G-Cter in SUMO2) linkage. The residue at position 232 (serine 232) is a Phosphoserine.

This sequence belongs to the mis18 family. Homodimer, and heterodimer with OIP5/MIS18B. Identified in a complex containing MIS18A, OIP5/MIS18B, MIS18BP1, RBBP7 and RBBP4.

The protein localises to the nucleus. It is found in the chromosome. The protein resides in the centromere. In terms of biological role, required for recruitment of CENPA to centromeres and normal chromosome segregation during mitosis. This is Protein Mis18-alpha (MIS18A) from Otolemur garnettii (Small-eared galago).